A 159-amino-acid polypeptide reads, in one-letter code: MSYPITSPSQFVFLSSVWADPIELLNVCTNSLGNQFQTQQARTTVQKQFSEVWKPFPQSTVRFPGDVYKVYRYNAVLDPLITALLGTFDTRNSIIEVENRQSPTTAETLDATRRVDDATVAIRSAINNLVNELVRGTGLYNQNTFESMSGLVWTSAPAS.

This sequence belongs to the virgaviridae capsid protein family.

It localises to the virion. In terms of biological role, capsid protein self-assembles to form rod-shaped virions about 18 nm in diameter with a central canal enclosing the viral genomic RNA. This is Capsid protein (CP) from Tomato mosaic virus (strain Kazakh K2) (ToMV).